Consider the following 294-residue polypeptide: MKTLQAAFFLVAFVPLVKPAPPIQQDSPKFYEYVDADFATGSLIQQDYEMLPKDTIKDGTNVSLDTALRLQADDSELSARPTKDTNLPTCLLCVCLSGSVYCEEIDIEAVPPLPKETAYLYARFNKIKRIAVSDFADITTLRRIDFSGNMIEEIEDGAFSKLLLLEELSLAENRLVKLPVLPPKLTTFNANQNRIKSRGIKNNAFKKLTNLAYLYLGHNALESVPLNLPESLRILHLQHNNITTINDDTFCKSNNTRYIRTRMDEIRMEGNPILLAKHVNAFSCLRTLPVGTYY.

The first 19 residues, 1–19 (MKTLQAAFFLVAFVPLVKP), serve as a signal peptide directing secretion. A glycan (N-linked (GlcNAc...) asparagine) is linked at Asn-61. 7 LRR repeats span residues 108-127 (EAVPPLPKETAYLYARFNKI), 128-151 (KRIAVSDFADITTLRRIDFSGNMI), 152-175 (EEIEDGAFSKLLLLEELSLAENRL), 176-195 (VKLPVLPPKLTTFNANQNRI), 196-221 (KSRGIKNNAFKKLTNLAYLYLGHNAL), 222-242 (ESVPLNLPESLRILHLQHNNI), and 243-273 (TTINDDTFCKSNNTRYIRTRMDEIRMEGNPI). N-linked (GlcNAc...) asparagine glycans are attached at residues Asn-241 and Asn-254. Cys-251 and Cys-284 are joined by a disulfide.

The protein belongs to the small leucine-rich proteoglycan (SLRP) family. SLRP class III subfamily. In terms of processing, the composition of the N-linked chains or the substitution of the N-linked sites is different between embryonic and adult tissues. Post-translationally, contains keratan sulfate.

It is found in the secreted. Its subcellular location is the extracellular space. It localises to the extracellular matrix. Its function is as follows. Induces bone formation in conjunction with TGF-beta-1 or TGF-beta-2. The sequence is that of Mimecan (OGN) from Gallus gallus (Chicken).